The sequence spans 181 residues: Der GTPase-activating protein YihI (181 aa).

The interval 1 to 73 (MSRIKKARKP…DPRIGSKKPI (73 aa)) is disordered. Basic and acidic residues predominate over residues 22-32 (NRTDRDVESRE). Over residues 33-42 (IKRKRKRKGL) the composition is skewed to basic residues. The span at 55 to 67 (QARRNAQKKDPRI) shows a compositional bias: basic and acidic residues.

Belongs to the YihI family. In terms of assembly, interacts with Der.

In terms of biological role, a GTPase-activating protein (GAP) that modifies Der/EngA GTPase function. May play a role in ribosome biogenesis. The protein is Der GTPase-activating protein YihI of Aliivibrio fischeri (strain ATCC 700601 / ES114) (Vibrio fischeri).